A 418-amino-acid polypeptide reads, in one-letter code: Pyruvate kinase isozyme G, chloroplastic (418 aa).

K(+)-binding residues include Asp14 and Thr15. Residue Arg21 participates in ATP binding. Mg(2+) is bound at residue Glu165. Residues Gly188, Asp189, and Thr221 each contribute to the substrate site. Asp189 is a binding site for Mg(2+).

Belongs to the pyruvate kinase family. It depends on Mg(2+) as a cofactor. K(+) serves as cofactor. In terms of tissue distribution, expressed in developing and germinating endosperm and in roots.

The protein resides in the plastid. Its subcellular location is the chloroplast. It carries out the reaction pyruvate + ATP = phosphoenolpyruvate + ADP + H(+). Its pathway is carbohydrate degradation; glycolysis; pyruvate from D-glyceraldehyde 3-phosphate: step 5/5. This chain is Pyruvate kinase isozyme G, chloroplastic, found in Ricinus communis (Castor bean).